The following is a 629-amino-acid chain: mRNA cleavage and polyadenylation factor CLP1 (629 aa).

The ATP site is built by glutamate 21 and lysine 72. Residues tyrosine 142–valine 166 form a disordered region. Residues threonine 148–serine 159 show a composition bias toward polar residues. ATP is bound at residue serine 183 to serine 188. The disordered stretch occupies residues proline 562 to glutamate 582.

This sequence belongs to the Clp1 family. Clp1 subfamily. In terms of assembly, component of a pre-mRNA cleavage factor complex. Interacts directly with PCF11.

The protein resides in the nucleus. Functionally, required for endonucleolytic cleavage during polyadenylation-dependent pre-mRNA 3'-end formation. The sequence is that of mRNA cleavage and polyadenylation factor CLP1 from Mycosarcoma maydis (Corn smut fungus).